A 188-amino-acid chain; its full sequence is uncharacterized protein (188 aa).

The protein resides in the plastid. Its subcellular location is the cyanelle. This is an uncharacterized protein from Cyanophora paradoxa.